A 465-amino-acid chain; its full sequence is Uronate isomerase (465 aa).

It belongs to the metallo-dependent hydrolases superfamily. Uronate isomerase family.

The enzyme catalyses D-glucuronate = D-fructuronate. It carries out the reaction aldehydo-D-galacturonate = keto-D-tagaturonate. It participates in carbohydrate metabolism; pentose and glucuronate interconversion. In Bacillus velezensis (strain DSM 23117 / BGSC 10A6 / LMG 26770 / FZB42) (Bacillus amyloliquefaciens subsp. plantarum), this protein is Uronate isomerase.